We begin with the raw amino-acid sequence, 308 residues long: tRNA dimethylallyltransferase (308 aa).

Position 14-21 (14-21 (GPTASGKT)) interacts with ATP. 16–21 (TASGKT) provides a ligand contact to substrate. 3 interaction with substrate tRNA regions span residues 39–42 (DSAL), 163–167 (QRLAR), and 244–249 (RCVGYR).

This sequence belongs to the IPP transferase family. As to quaternary structure, monomer. It depends on Mg(2+) as a cofactor.

It catalyses the reaction adenosine(37) in tRNA + dimethylallyl diphosphate = N(6)-dimethylallyladenosine(37) in tRNA + diphosphate. Catalyzes the transfer of a dimethylallyl group onto the adenine at position 37 in tRNAs that read codons beginning with uridine, leading to the formation of N6-(dimethylallyl)adenosine (i(6)A). The protein is tRNA dimethylallyltransferase of Shewanella piezotolerans (strain WP3 / JCM 13877).